Consider the following 196-residue polypeptide: Peroxisome assembly protein 22 (196 aa).

A helical transmembrane segment spans residues 15–37 (LWIAALVAASIVTISYKVYSSYI).

The protein belongs to the peroxin-22 family.

Its subcellular location is the peroxisome membrane. Its function is as follows. Involved in peroxisome biogenesis. The protein is Peroxisome assembly protein 22 (PEX22) of Debaryomyces hansenii (strain ATCC 36239 / CBS 767 / BCRC 21394 / JCM 1990 / NBRC 0083 / IGC 2968) (Yeast).